The primary structure comprises 318 residues: Ribonuclease Z (318 aa).

Zn(2+) is bound by residues His-62, His-64, Asp-66, His-67, His-139, Asp-210, and His-268. Asp-66 acts as the Proton acceptor in catalysis.

It belongs to the RNase Z family. As to quaternary structure, homodimer. Zn(2+) serves as cofactor.

It catalyses the reaction Endonucleolytic cleavage of RNA, removing extra 3' nucleotides from tRNA precursor, generating 3' termini of tRNAs. A 3'-hydroxy group is left at the tRNA terminus and a 5'-phosphoryl group is left at the trailer molecule.. Its function is as follows. Zinc phosphodiesterase, which displays some tRNA 3'-processing endonuclease activity. Probably involved in tRNA maturation, by removing a 3'-trailer from precursor tRNA. This is Ribonuclease Z from Gloeothece citriformis (strain PCC 7424) (Cyanothece sp. (strain PCC 7424)).